We begin with the raw amino-acid sequence, 587 residues long: MDNYTSDEDIDEDFDTQLIIQQSLQDIYKPGTAQHAPKDESLHSFLSADYKKIVETIEKVGKEDALSHLTKYHSAFGEADEIGWIPLHKAAVQLNRKILEITLSASDPSLWEQTTHNGETPLFLAVSSCLLENATFLLLNGCNPNAKNFEGNSPLLAAVLRDCYDMAALLINYGADVNLRCANERTALHEAAKLGREDMVKLMLVSGAHPDPQSTYGFTPLALAAQSGHTEIMEMLLRKGKIFCLASDSSSILLEAASGGNPDAVALLLEYGADANIPKNSGHLPIHVAADRGHLLALKILIPVTDLAAIKQSGISPVHCAAAGAHPQCLELLIQAGFDVNFMLDQRINKHYDDHRKSALYFAVSNSDLSSVKLLLSAGALPNQDPVNCLQIALRMGNYELISLLLRHGANVNYFCRVNPLHFPSALQYTLKDEVMLRMLLNYGYDTERCFDCPHGDKVHPSYTVEGWTSTVIKDTKFCEVITLSWLQHLSGKVVRVMLDYVDQVRICSKLKAVLQKQGIWSEIHFILTNPRSLKHLCRLKIRKCMGRLHLRCPVFMSFLPLPNRLKAYVLYKEYDLYGQGIFTGTW.

ANK repeat units lie at residues 82 to 112, 117 to 146, 150 to 179, 183 to 212, 216 to 245, 248 to 277, 281 to 310, 313 to 342, 355 to 384, 385 to 414, and 416 to 449; these read IGWIPLHKAAVQLNRKILEITLSASDPSLWE, NGETPLFLAVSSCLLENATFLLLNGCNPNA, EGNSPLLAAVLRDCYDMAALLINYGADVNL, NERTALHEAAKLGREDMVKLMLVSGAHPDP, YGFTPLALAAQSGHTEIMEMLLRKGKIFCL, DSSSILLEAASGGNPDAVALLLEYGADANI, SGHLPIHVAADRGHLLALKILIPVTDLAAI, SGISPVHCAAAGAHPQCLELLIQAGFDVNF, HRKSALYFAVSNSDLSSVKLLLSAGALPNQ, DPVNCLQIALRMGNYELISLLLRHGANVNY, and CRVNPLHFPSALQYTLKDEVMLRMLLNYGYDTER. The SOCS box domain occupies 521 to 576; it reads WSEIHFILTNPRSLKHLCRLKIRKCMGRLHLRCPVFMSFLPLPNRLKAYVLYKEYD.

It belongs to the ankyrin SOCS box (ASB) family. In terms of assembly, interacts with MAPRE2; this interaction promotes MAPRE2 degradation.

It participates in protein modification; protein ubiquitination. Functionally, may be a substrate-recognition component of a SCF-like ECS (Elongin-Cullin-SOCS-box protein) E3 ubiquitin-protein ligase complex which mediates the ubiquitination and subsequent proteasomal degradation of target proteins. Plays a role in the inhibition of cardiomyocyte nuclear proliferation by mediating the ubiquitination and degradation of MAPRE2. This chain is Ankyrin repeat and SOCS box protein 14 (ASB14), found in Homo sapiens (Human).